A 288-amino-acid polypeptide reads, in one-letter code: Acidic endochitinase SP2 (288 aa).

The N-terminal stretch at 1-27 (MTLLLKNTLYLALIISVISSFPTSLFA) is a signal peptide. Residue glutamine 28 is modified to Pyrrolidone carboxylic acid. Residues 28 to 63 (QNCGCAPNLCCSNFGFCGTGTPYCGVGNCQSGPCEG) form the Chitin-binding type-1 domain. 4 disulfides stabilise this stretch: cysteine 30–cysteine 38, cysteine 32–cysteine 44, cysteine 37–cysteine 51, and cysteine 56–cysteine 61. Residues 64-78 (GTPTTPTTPTTPTTP) show a composition bias toward low complexity. The interval 64–84 (GTPTTPTTPTTPTTPGTGGGG) is disordered. The segment at 64–85 (GTPTTPTTPTTPTTPGTGGGGS) is hinge region (Gly/Pro/Thr-rich). 4-hydroxyproline occurs at positions 66, 69, 72, and 75. Repeat copies occupy residues 67–69 (TTP), 70–72 (TTP), 73–75 (TTP), and 76–78 (TTP). Residues 67–78 (TTPTTPTTPTTP) are 4 X 3 AA tandem repeats of T-T-P. The segment at 86-288 (SVSDIVSQAF…GVAPGDNLTC (203 aa)) is catalytic. Cystine bridges form between cysteine 107-cysteine 154, cysteine 168-cysteine 178, and cysteine 256-cysteine 288. Glutamate 149 acts as the Proton donor in catalysis.

It belongs to the glycosyl hydrolase 19 family. Chitinase class I subfamily. Post-translationally, O-glycosylated on hydroxyprolines; contains xylose. In terms of tissue distribution, localized to infected area.

Its subcellular location is the secreted. The protein localises to the extracellular space. The enzyme catalyses Random endo-hydrolysis of N-acetyl-beta-D-glucosaminide (1-&gt;4)-beta-linkages in chitin and chitodextrins.. Its function is as follows. Defense against chitin-containing fungal pathogens. This Beta vulgaris (Sugar beet) protein is Acidic endochitinase SP2 (SP2).